The sequence spans 393 residues: SEC12-like protein 2 (393 aa).

The residue at position 2 (A2) is an N-acetylalanine. Topologically, residues 2 to 367 (ANQSTETNQP…EQKGDKPGVR (366 aa)) are cytoplasmic. The interval 41–67 (EKSEDDDESSSSSSSSRSCIVLSGGGG) is disordered. Residue S43 is modified to Phosphoserine. WD repeat units lie at residues 151–190 (RDVGQQLALAFNPEGSVLAAGAEDGTLRVFKWPSMNTLLN), 193–231 (QAHSSVKCLTFSESGQFLVSLGGPVCRVWDVNASAAVAS), 283–322 (IKKNSISAFNVSADGKLLAIGTLEGDVLILESTRMQTIQV), and 326–367 (AHLG…PGVR). Residues 368-388 (WWLLVLLIVLLYVVAYYYMKA) form a helical; Signal-anchor for type II membrane protein membrane-spanning segment. Over 389 to 393 (KGIIP) the chain is Lumenal.

As to quaternary structure, interacts with BZIP28.

It is found in the endoplasmic reticulum membrane. It localises to the golgi apparatus. The protein resides in the cis-Golgi network membrane. In terms of biological role, required for the formation or budding of transport vesicles from the ER. The chain is SEC12-like protein 2 (STL2P) from Arabidopsis thaliana (Mouse-ear cress).